The following is a 517-amino-acid chain: Gamma-1-syntrophin (517 aa).

A PDZ domain is found at 57–140 (TVTIRRQTVG…EVTLTVSFLK (84 aa)). The PH domain occupies 283–390 (QIVYMGWCEA…WERAFQTATF (108 aa)).

This sequence belongs to the syntrophin family. As to quaternary structure, interacts with the dystrophin protein DMD and related proteins DTNA and DTNB. Interacts with DGKZ.

The protein localises to the cytoplasm. It is found in the cytoskeleton. It localises to the nucleus. In terms of biological role, adapter protein that binds to and probably organizes the subcellular localization of a variety of proteins. May link various receptors to the actin cytoskeleton and the dystrophin glycoprotein complex. May participate in regulating the subcellular location of diacylglycerol kinase-zeta to ensure that diacylglycerol is rapidly inactivated following receptor activation. This Mus musculus (Mouse) protein is Gamma-1-syntrophin (Sntg1).